The chain runs to 387 residues: S-adenosylmethionine synthase (387 aa).

H16 serves as a coordination point for ATP. Mg(2+) is bound at residue D18. A K(+)-binding site is contributed by E44. The L-methionine site is built by E57 and Q100. The interval Q100–E110 is flexible loop. ATP-binding positions include D167–K169, R232–F233, D241, R247–K248, A264, and K268. D241 contributes to the L-methionine binding site. K272 provides a ligand contact to L-methionine.

The protein belongs to the AdoMet synthase family. Homotetramer; dimer of dimers. The cofactor is Mg(2+). K(+) is required as a cofactor.

The protein resides in the cytoplasm. It carries out the reaction L-methionine + ATP + H2O = S-adenosyl-L-methionine + phosphate + diphosphate. Its pathway is amino-acid biosynthesis; S-adenosyl-L-methionine biosynthesis; S-adenosyl-L-methionine from L-methionine: step 1/1. In terms of biological role, catalyzes the formation of S-adenosylmethionine (AdoMet) from methionine and ATP. The overall synthetic reaction is composed of two sequential steps, AdoMet formation and the subsequent tripolyphosphate hydrolysis which occurs prior to release of AdoMet from the enzyme. The chain is S-adenosylmethionine synthase from Janthinobacterium sp. (strain Marseille) (Minibacterium massiliensis).